A 299-amino-acid polypeptide reads, in one-letter code: Oxygen-dependent coproporphyrinogen-III oxidase (299 aa).

Ser-92 provides a ligand contact to substrate. The a divalent metal cation site is built by His-96 and His-106. His-106 serves as the catalytic Proton donor. Residue 108 to 110 coordinates substrate; the sequence is NVR. Positions 145 and 175 each coordinate a divalent metal cation. The important for dimerization stretch occupies residues 240-275; it reads YVEFNLVWDRGTLFGLQTGGRTESILMSMPPLVRWE. A substrate-binding site is contributed by 258-260; the sequence is GGR.

Belongs to the aerobic coproporphyrinogen-III oxidase family. Homodimer. A divalent metal cation is required as a cofactor.

The protein resides in the cytoplasm. The enzyme catalyses coproporphyrinogen III + O2 + 2 H(+) = protoporphyrinogen IX + 2 CO2 + 2 H2O. The protein operates within porphyrin-containing compound metabolism; protoporphyrin-IX biosynthesis; protoporphyrinogen-IX from coproporphyrinogen-III (O2 route): step 1/1. Its function is as follows. Involved in the heme biosynthesis. Catalyzes the aerobic oxidative decarboxylation of propionate groups of rings A and B of coproporphyrinogen-III to yield the vinyl groups in protoporphyrinogen-IX. The protein is Oxygen-dependent coproporphyrinogen-III oxidase of Salmonella enteritidis PT4 (strain P125109).